Consider the following 372-residue polypeptide: Peroxisomal biogenesis factor 3 (372 aa).

Topologically, residues 1 to 15 are cytoplasmic; the sequence is MLRSMWNFLKRHKKK. The targeting to peroxisomes stretch occupies residues 1–45; it reads MLRSMWNFLKRHKKKCIFLGTVLGGVYILGKYGQKKLREIQEREA. The helical transmembrane segment at 16 to 36 threads the bilayer; sequence CIFLGTVLGGVYILGKYGQKK. The Peroxisomal segment spans residues 37–116; the sequence is LREIQEREAA…LKIISFTRSI (80 aa). Residues 117 to 140 traverse the membrane as a helical segment; it reads VAVYSTCMLVVLLRVQLNIIGGYI. An interaction with PEX19 region spans residues 120 to 136; that stretch reads YSTCMLVVLLRVQLNII. At 141–372 the chain is on the cytoplasmic side; it reads YLDNATVGKN…AFSTPQQLEK (232 aa).

It belongs to the peroxin-3 family. Interacts with PEX19.

It localises to the peroxisome membrane. Functionally, involved in peroxisome biosynthesis and integrity. Assembles membrane vesicles before the matrix proteins are translocated. As a docking factor for PEX19, is necessary for the import of peroxisomal membrane proteins in the peroxisomes. The protein is Peroxisomal biogenesis factor 3 (Pex3) of Rattus norvegicus (Rat).